The primary structure comprises 303 residues: uncharacterized protein (303 aa).

4 helical membrane-spanning segments follow: residues F55–Q77, P92–I111, F208–L230, and I240–I257.

The protein localises to the cell membrane. This is an uncharacterized protein from Bacillus subtilis (strain 168).